Here is a 173-residue protein sequence, read N- to C-terminus: Lipid A deacylase PagL (173 aa).

The first 23 residues, 1–23 (MKKLLPLAVLAALSSVHVASAQA), serve as a signal peptide directing secretion. The Periplasmic portion of the chain corresponds to 25-28 (DVSA). A beta stranded transmembrane segment spans residues 29–32 (AVGA). Residue T33 is a topological domain, periplasmic. A beta stranded membrane pass occupies residues 34 to 49 (GQSGMTYRLGLSWDWD). Residues 50 to 56 (KSWWQTS) lie on the Extracellular side of the membrane. The beta stranded transmembrane segment at 57 to 71 (TGRLTGYWDAGYTYW) threads the bilayer. Residues 72 to 73 (EG) are Periplasmic-facing. The chain crosses the membrane as a beta stranded span at residues 74–89 (GDEGAGKHSLSFAPVF). Residue V90 is a topological domain, extracellular. Residues 91 to 93 (YEF) traverse the membrane as a beta stranded segment. Topologically, residues 94 to 95 (AG) are periplasmic. The chain crosses the membrane as a beta stranded span at residues 96-98 (DSI). At 99 to 100 (KP) the chain is on the extracellular side. The chain crosses the membrane as a beta stranded span at residues 101–115 (FIEAGIGVAAFSGTR). Residues 116 to 117 (VG) are Periplasmic-facing. Residues 118-128 (DQNLGSSLNFE) traverse the membrane as a beta stranded segment. The Extracellular segment spans residues 129–138 (DRIGAGLKFA). The chain crosses the membrane as a beta stranded span at residues 139 to 148 (NGQSVGVRAI). Residues H149, S151, and E163 each act as charge relay system in the active site. Topologically, residues 149 to 173 (HYSNAGLKQPNDGIESYSLFYKIPI) are periplasmic.

Belongs to the PagL family. In terms of assembly, homodimer.

It is found in the cell outer membrane. The enzyme catalyses a 3-(acyloxy)acyl derivative of bacterial toxin + H2O = a 3-hydroxyacyl derivative of bacterial toxin + a fatty acid + H(+). Its activity is regulated as follows. Decreased activity at low temperatures (15 or 21 degrees Celsius). Its function is as follows. Has lipid A 3-O-deacylase activity. Hydrolyzes the ester bond at the 3 position of lipid A, a bioactive component of lipopolysaccharide (LPS), thereby releasing the primary fatty acyl moiety. Lacks fatty acyl chain-length specificity as removes both 3-OH C10 and 3-OH C14 fatty acids from lipid A. This Pseudomonas aeruginosa (strain ATCC 15692 / DSM 22644 / CIP 104116 / JCM 14847 / LMG 12228 / 1C / PRS 101 / PAO1) protein is Lipid A deacylase PagL.